Here is a 180-residue protein sequence, read N- to C-terminus: Hypoxanthine-guanine phosphoribosyltransferase (180 aa).

The diphosphate site is built by lysine 43 and glycine 44. Glutamate 99 and aspartate 100 together coordinate Mg(2+). Catalysis depends on aspartate 103, which acts as the Proton acceptor. GMP contacts are provided by residues lysine 131, 152-153, and aspartate 159; that span reads FI. Arginine 165 provides a ligand contact to diphosphate.

Belongs to the purine/pyrimidine phosphoribosyltransferase family. It depends on Mg(2+) as a cofactor.

Its subcellular location is the cytoplasm. The enzyme catalyses IMP + diphosphate = hypoxanthine + 5-phospho-alpha-D-ribose 1-diphosphate. The catalysed reaction is GMP + diphosphate = guanine + 5-phospho-alpha-D-ribose 1-diphosphate. It functions in the pathway purine metabolism; IMP biosynthesis via salvage pathway; IMP from hypoxanthine: step 1/1. It participates in purine metabolism; GMP biosynthesis via salvage pathway; GMP from guanine: step 1/1. Purine salvage pathway enzyme that catalyzes the transfer of the ribosyl-5-phosphate group from 5-phospho-alpha-D-ribose 1-diphosphate (PRPP) to the N9 position of the 6-oxopurines hypoxanthine and guanine to form the corresponding ribonucleotides IMP (inosine 5'-monophosphate) and GMP (guanosine 5'-monophosphate), with the release of PPi. The protein is Hypoxanthine-guanine phosphoribosyltransferase (hpt) of Streptococcus mutans serotype c (strain ATCC 700610 / UA159).